The chain runs to 220 residues: Response regulator protein TmoT (220 aa).

Residues 21-135 form the Response regulatory domain; it reads VIYIVDDDNA…DLLGAIRTAL (115 aa). Residue Asp70 is modified to 4-aspartylphosphate. The region spanning 151–216 is the HTH luxR-type domain; the sequence is LKASYESLSK…DLVRVTERLK (66 aa). The H-T-H motif DNA-binding region spans 175 to 194; sequence NKQTALELDISEATVKVHRH.

Phosphorylated by TmoS.

It localises to the cytoplasm. Functionally, member of the two-component regulatory system TmoS/TmoT involved in the regulation of toluene degradation. Induces expression of tmoX operon. The chain is Response regulator protein TmoT (tmoT) from Ectopseudomonas mendocina (Pseudomonas mendocina).